The following is a 445-amino-acid chain: Xylose isomerase (445 aa).

Catalysis depends on residues histidine 107 and aspartate 110. Residues glutamate 238, glutamate 274, histidine 277, aspartate 302, aspartate 313, aspartate 315, and aspartate 345 each coordinate Mg(2+).

It belongs to the xylose isomerase family. As to quaternary structure, homotetramer. The cofactor is Mg(2+).

The protein resides in the cytoplasm. It carries out the reaction alpha-D-xylose = alpha-D-xylulofuranose. The sequence is that of Xylose isomerase from Bacillus velezensis (strain DSM 23117 / BGSC 10A6 / LMG 26770 / FZB42) (Bacillus amyloliquefaciens subsp. plantarum).